Here is a 735-residue protein sequence, read N- to C-terminus: MRRSFSVLGPYKWLKPSSTYTNVYCFVTNPPLISNPNNGSAIFRYLSYFAPQQRRQQQQAPDPDDPANLLKEDGVSLCSQMWLENFKEPDKTATNLTSYLRRFELWVLAYQKVCCDELGAYVPRSSIQRSALENLLALRNSVLDDRFKWGSRLDFYIKSPRDKTDYESLSKRKIKAILTTTQPTPFQDRIVQEVLLMILEPIYESRFSQKSFAFRPGRTAHTVLRVIRRNFAGYLWYVKGDLSVVLDGMKVGFVISSLMRDVRDKKVIDLIKSALVTPVVTSKVEDGEKKKTKKRKYQKKRVLAEDEPKPDPYWLETFFGFAPEEAGKSPQWGHCGILSPLLVNVCLDELDRWMETKVKDFYRPSKSDVIWNNPEGEADQGNTSWPEFVPTSGPDKTRKMDYVRYGGHILIGVRGPRADAATLRKELIEFVDQKYMLRLDNENLPIEHITKGIMFLDHVLCRRVVYPTLRYTATGGKIISEKGVGTLLSVTASLKQCIKQFRKLLFIKGDRDPDPQPCFRMFHATQAHTNNQMNKFLTTIAEWYRFADNRKKIVNFCSYIIRGSLAKLYAAKYKLRSRAKVYKFANRNLSLPLLQKKGQSPEYQNLLRMGLAESVDGLVYTRMSLVPETDYSPFPGNWRPEHEKFLIEYLTLDEPKTLEEQKRFIREKGLVSPQDYTSMLVWNYKRNAIPMDQVSILKDQPFLLGSSSTYNRDNDDQKNKEEDEDSEDGLRIARM.

Residues 1-12 (MRRSFSVLGPYK) constitute a mitochondrion transit peptide. Residues 161-460 (RDKTDYESLS…KGIMFLDHVL (300 aa)) form the Reverse transcriptase domain. The segment at 485–653 (GTLLSVTASL…KFLIEYLTLD (169 aa)) is intron maturase type-2. The disordered stretch occupies residues 707–735 (SSTYNRDNDDQKNKEEDEDSEDGLRIARM). Over residues 712-721 (RDNDDQKNKE) the composition is skewed to basic and acidic residues.

Belongs to the plant nuclear intron maturase (nMat) family. In terms of assembly, associated to a large ribonucleoprotein complex in mitochondria containing group-II intron RNAs.

The protein resides in the mitochondrion. Its function is as follows. Nuclear-encoded maturase required for splicing of group-II introns in mitochondria. Involved in the splicing of mitochondrial COX2, NAD1 and NAD7 transcripts. Necessary for mitochondrial biogenesis during early developmental stages. The chain is Nuclear intron maturase 2, mitochondrial from Arabidopsis thaliana (Mouse-ear cress).